The following is a 278-amino-acid chain: Neuronal membrane glycoprotein M6-a (278 aa).

Residue M1 is modified to N-acetylmethionine. Residues 1 to 22 (MEENMEEGQTQKGCFECCIKCL) are Cytoplasmic-facing. The helical transmembrane segment at 23–43 (GGIPYASLIATILLYAGVALF) threads the bilayer. The Extracellular portion of the chain corresponds to 44–84 (CGCGHEALSGTVNILQTYFELARTAGDTLDVFTMIDIFKYV). A helical membrane pass occupies residues 85 to 105 (IYGIAAAFFVYGILLMVEGFF). Over 106–127 (TTGAIKDLYGDFKITTCGRCVS) the chain is Cytoplasmic. The chain crosses the membrane as a helical span at residues 128-148 (AWFIMLTYLFMLAWLGVTAFT). The Extracellular portion of the chain corresponds to 149–213 (SLPVYMYFNV…STELNMTFHL (65 aa)). The N-linked (GlcNAc...) asparagine glycan is linked to N164. C174 and C192 are disulfide-bonded. An N-linked (GlcNAc...) asparagine glycan is attached at N208. The helical transmembrane segment at 214-234 (FIVALAGAGAAVIAMVHYLMV) threads the bilayer. Topologically, residues 235-278 (LSANWAYVKDACRMQKYEDIKSKEEQELHDIHSTRSKERLNAYT) are cytoplasmic. S256 carries the post-translational modification Phosphoserine. T278 carries the post-translational modification Phosphothreonine.

It belongs to the myelin proteolipid protein family. In terms of assembly, interacts with OPRM1. Interacts with palmitoyltransferase ZDHHC17/HIP14; the interaction leads to palmitoylation of GPM6A. Post-translationally, N-glycosylated. Palmitoylated by ZDHHC17/HIP14. Widely expressed in the CNS. Found especially in the granule cell layer of the cerebellum but not in the molecular layer or white matter. Expressed in the immature embryonic retina including the nerve fiber layer (NFL), inner plexiform layer (IPL), and outer plexiform layer (OPL). Weakly expressed in processes of Mueller glia cells.

Its subcellular location is the cell membrane. The protein localises to the cell projection. It localises to the axon. The protein resides in the growth cone. It is found in the dendritic spine. Its subcellular location is the filopodium. The protein localises to the neuron projection. Involved in neuronal differentiation, including differentiation and migration of neuronal stem cells. Plays a role in neuronal plasticity and is involved in neurite and filopodia outgrowth, filopodia motility and probably synapse formation. Gpm6a-induced filopodia formation involves mitogen-activated protein kinase (MAPK) and Src signaling pathways. Conflictingly, PubMed:22162747 reports that induced cellular protrusions are simple membrane-wrapped tubules without actin or tubulin-based cytoskeletons and with Gpm6a gliding along membrane edges indicative for a function in actin-independent membrane deformation. May be involved in neuronal NGF-dependent Ca(2+) influx. May be involved in regulation of endocytosis and intracellular trafficking of G-protein-coupled receptors (GPCRs); enhances internalization and recycling of mu-type opioid receptor. This chain is Neuronal membrane glycoprotein M6-a (Gpm6a), found in Mus musculus (Mouse).